The following is a 378-amino-acid chain: Cytochrome b (378 aa).

The next 4 membrane-spanning stretches (helical) occupy residues 34 to 54, 78 to 99, 114 to 134, and 179 to 199; these read FGSL…FLAM, WLLR…YLHV, WLIG…GYVL, and FFTF…IHLL. Residues histidine 84 and histidine 98 each contribute to the heme b site. Histidine 183 and histidine 197 together coordinate heme b. Histidine 202 contacts a ubiquinone. The next 4 membrane-spanning stretches (helical) occupy residues 227–247, 289–309, 321–341, and 348–368; these read FKDI…VLIS, LGGV…PFYN, INQV…WIGA, and YVLI…VNPL.

Belongs to the cytochrome b family. The main subunits of complex b-c1 are: cytochrome b, cytochrome c1 and the Rieske protein. Heme b serves as cofactor.

It localises to the mitochondrion inner membrane. Functionally, component of the ubiquinol-cytochrome c reductase complex (complex III or cytochrome b-c1 complex) that is part of the mitochondrial respiratory chain. The b-c1 complex mediates electron transfer from ubiquinol to cytochrome c. Contributes to the generation of a proton gradient across the mitochondrial membrane that is then used for ATP synthesis. The polypeptide is Cytochrome b (mt:Cyt-b) (Drosophila simulans (Fruit fly)).